Here is a 684-residue protein sequence, read N- to C-terminus: Pheromone-processing carboxypeptidase KEX1 (684 aa).

The first 16 residues, methionine 1–alanine 16, serve as a signal peptide directing secretion. Residues leucine 17–lysine 588 lie on the Lumenal side of the membrane. Residues serine 181 and aspartate 390 contribute to the active site. 2 N-linked (GlcNAc...) asparagine glycosylation sites follow: asparagine 443 and asparagine 451. Histidine 454 is an active-site residue. Residues aspartate 498 to arginine 582 are disordered. Over residues glutamate 514–threonine 547 the composition is skewed to acidic residues. A compositionally biased stretch (basic and acidic residues) spans asparagine 554–arginine 578. The helical transmembrane segment at isoleucine 589–isoleucine 609 threads the bilayer. Residues arginine 610–leucine 684 lie on the Cytoplasmic side of the membrane. The segment at leucine 641–leucine 684 is disordered. Positions aspartate 650 to proline 671 are enriched in polar residues. Acidic residues predominate over residues glutamate 674–leucine 684.

Belongs to the peptidase S10 family.

Its subcellular location is the golgi apparatus. It is found in the trans-Golgi network membrane. It carries out the reaction Preferential release of a C-terminal arginine or lysine residue.. Functionally, protease with a carboxypeptidase B-like function involved in the C-terminal processing of the lysine and arginine residues from protein precursors. Promotes cell fusion and is involved in the programmed cell death. The polypeptide is Pheromone-processing carboxypeptidase KEX1 (KEX1) (Zygosaccharomyces rouxii (strain ATCC 2623 / CBS 732 / NBRC 1130 / NCYC 568 / NRRL Y-229)).